The primary structure comprises 888 residues: Alanine--tRNA ligase (888 aa).

Histidine 564, histidine 568, cysteine 676, and histidine 680 together coordinate Zn(2+).

It belongs to the class-II aminoacyl-tRNA synthetase family. It depends on Zn(2+) as a cofactor.

It is found in the cytoplasm. The enzyme catalyses tRNA(Ala) + L-alanine + ATP = L-alanyl-tRNA(Ala) + AMP + diphosphate. Functionally, catalyzes the attachment of alanine to tRNA(Ala) in a two-step reaction: alanine is first activated by ATP to form Ala-AMP and then transferred to the acceptor end of tRNA(Ala). Also edits incorrectly charged Ser-tRNA(Ala) and Gly-tRNA(Ala) via its editing domain. This chain is Alanine--tRNA ligase, found in Bartonella quintana (strain Toulouse) (Rochalimaea quintana).